The chain runs to 313 residues: MAAEEEDEVEWVVESIAGFLRGPDWSIPILDFVEQKCEVFDDEEESKLTYTEIHQEYKELVEKLLETYLKEIGINEDQFQEACTSPLAKTRTSQAILQPVLAAEDFTIFKAMMVEKNTEMQLQAIRIIQERNGVLPDCLTDGSDVVSDLEQEEMKILKEVLRKSKEEYDQEEERKRKKQLSEAKTEEHPMQANETAKMSNSQGDGEHFAHPASGLKIPGFEHASMEGPIANLSTLRTEELRQREHYLKQKRDKLMSMRKDMKIKQNQTSEQKGKPAGEVEEMTEKPEMTAEEKQTLLKRRLLAEKLKEEVINK.

Phosphoserine occurs at positions 85 and 147. Residues 147–187 adopt a coiled-coil conformation; it reads SDLEQEEMKILKEVLRKSKEEYDQEEERKRKKQLSEAKTEE. Disordered stretches follow at residues 165-204 and 262-292; these read KEEY…SQGD and KIKQ…TAEE. Positions 179–189 are enriched in basic and acidic residues; the sequence is QLSEAKTEEHP. Positions 192–203 are enriched in polar residues; the sequence is ANETAKMSNSQG. Ser-201 is modified (phosphoserine). Basic and acidic residues predominate over residues 271–292; the sequence is QKGKPAGEVEEMTEKPEMTAEE.

This sequence belongs to the CFAP36 family. As to quaternary structure, interacts with ARL3.

The protein localises to the nucleus. It is found in the cytoplasm. The protein resides in the cell projection. It localises to the cilium. Its subcellular location is the flagellum. Its function is as follows. May act as an effector for ARL3. This chain is Cilia- and flagella-associated protein 36, found in Bos taurus (Bovine).